Consider the following 380-residue polypeptide: SAM and SH3 domain-containing protein 3 (380 aa).

The interval 1–76 is disordered; sequence MLRRKPSNAS…KSGKKLGKKW (76 aa). The span at 22 to 41 shows a compositional bias: low complexity; it reads LQRSSSFKDFAKSKPSSPVV. Residues Ser-27, Ser-34, and Ser-42 each carry the phosphoserine modification. Thr-61 carries the post-translational modification Phosphothreonine. Ser-97 is subject to Phosphoserine. 3 disordered regions span residues 98-174, 237-256, and 318-380; these read EEMA…TGPF, VGHA…KPKT, and TGSE…AGAP. Thr-103 is subject to Phosphothreonine. Ser-110 is subject to Phosphoserine. Thr-112 is subject to Phosphothreonine. At Ser-113 the chain carries Phosphoserine. Tyr-116 is modified (phosphotyrosine). The residue at position 120 (Ser-120) is a Phosphoserine. A compositionally biased stretch (polar residues) spans 143-152; it reads RQASTGSELC. Low complexity predominate over residues 153–164; that stretch reads SPSPGSGSFGEE. One can recognise an SH3 domain in the interval 173–234; the sequence is PFCGRARVHT…KFIYVDVLPE (62 aa). Basic residues predominate over residues 241–255; sequence RPSRRQSKGKRPKPK. One can recognise an SAM domain in the interval 252 to 316; sequence PKPKTLHELL…LTAAELLLDY (65 aa). Position 318 is a phosphothreonine (Thr-318). The span at 318–327 shows a compositional bias: acidic residues; sequence TGSEEAEEGA. A Phosphoserine modification is found at Ser-320.

Its function is as follows. May function as a signaling adapter protein in lymphocytes. In Homo sapiens (Human), this protein is SAM and SH3 domain-containing protein 3 (SASH3).